Here is a 631-residue protein sequence, read N- to C-terminus: Leucine aminopeptidase 2-2 (631 aa).

Residues 140-142 (QCQ) and 265-270 (PYGGME) each bind substrate. H294 is a binding site for Zn(2+). E295 functions as the Proton acceptor in the catalytic mechanism. Residues H298 and E317 each contribute to the Zn(2+) site. The active-site Proton donor is the Y395.

Belongs to the peptidase M1 family. It depends on Zn(2+) as a cofactor.

It is found in the cytoplasm. The protein resides in the nucleus. The enzyme catalyses an epoxide + H2O = an ethanediol. Its function is as follows. Aminopeptidase that preferentially cleaves di- and tripeptides. Also has low epoxide hydrolase activity (in vitro). Can hydrolyze the epoxide leukotriene LTA(4) but it forms preferentially 5,6-dihydroxy-7,9,11,14-eicosatetraenoic acid rather than the cytokine leukotriene B(4) as the product compared to the homologous mammalian enzyme (in vitro). This Meyerozyma guilliermondii (strain ATCC 6260 / CBS 566 / DSM 6381 / JCM 1539 / NBRC 10279 / NRRL Y-324) (Yeast) protein is Leucine aminopeptidase 2-2.